The chain runs to 584 residues: Dihydroxyacetone kinase 1 (584 aa).

The residue at position 2 (serine 2) is an N-acetylserine. Phosphoserine is present on residues serine 2 and serine 5. The 347-residue stretch at 7–353 (EVTDPVNSSL…LNAFTNAPGW (347 aa)) folds into the DhaK domain. Substrate contacts are provided by residues 51–54 (GSGH), lysine 103, and aspartate 108. The Tele-hemiaminal-histidine intermediate role is filled by histidine 220. Serine 365 is modified (phosphoserine). The DhaL domain occupies 386-582 (DKFAEWMKSG…LCEFLKGVQS (197 aa)). ATP contacts are provided by residues 415-418 (DGDC) and 459-460 (TS). Serine 512 is modified (phosphoserine). ATP-binding positions include 514 to 515 (TM) and 567 to 569 (DPG).

It belongs to the dihydroxyacetone kinase (DAK) family.

It catalyses the reaction dihydroxyacetone + ATP = dihydroxyacetone phosphate + ADP + H(+). It carries out the reaction D-glyceraldehyde + ATP = D-glyceraldehyde 3-phosphate + ADP + H(+). It functions in the pathway polyol metabolism; glycerol fermentation; glycerone phosphate from glycerol (oxidative route): step 2/2. Its function is as follows. Catalyzes both the phosphorylation of dihydroxyacetone and of glyceraldehyde. This chain is Dihydroxyacetone kinase 1 (DAK1), found in Saccharomyces cerevisiae (strain ATCC 204508 / S288c) (Baker's yeast).